The chain runs to 460 residues: Bifunctional protein GlmU (460 aa).

Positions 1–235 (MALSAAIILA…PLSVEGVNDR (235 aa)) are pyrophosphorylase. UDP-N-acetyl-alpha-D-glucosamine-binding positions include 9-12 (LAAG), K23, Q76, and 81-82 (GT). Residue D109 coordinates Mg(2+). Positions 146, 161, 176, and 233 each coordinate UDP-N-acetyl-alpha-D-glucosamine. N233 contacts Mg(2+). The segment at 236-256 (VQLAALAKAHNKRVCEHWMRE) is linker. An N-acetyltransferase region spans residues 257–460 (GVTILDPDTT…VEGWKPEWER (204 aa)). UDP-N-acetyl-alpha-D-glucosamine contacts are provided by R338 and K356. Residue H368 is the Proton acceptor of the active site. Positions 371 and 382 each coordinate UDP-N-acetyl-alpha-D-glucosamine. Residues 391 to 392 (NY) and A428 each bind acetyl-CoA.

The protein in the N-terminal section; belongs to the N-acetylglucosamine-1-phosphate uridyltransferase family. It in the C-terminal section; belongs to the transferase hexapeptide repeat family. In terms of assembly, homotrimer. Mg(2+) is required as a cofactor.

It localises to the cytoplasm. The enzyme catalyses alpha-D-glucosamine 1-phosphate + acetyl-CoA = N-acetyl-alpha-D-glucosamine 1-phosphate + CoA + H(+). It catalyses the reaction N-acetyl-alpha-D-glucosamine 1-phosphate + UTP + H(+) = UDP-N-acetyl-alpha-D-glucosamine + diphosphate. The protein operates within nucleotide-sugar biosynthesis; UDP-N-acetyl-alpha-D-glucosamine biosynthesis; N-acetyl-alpha-D-glucosamine 1-phosphate from alpha-D-glucosamine 6-phosphate (route II): step 2/2. It functions in the pathway nucleotide-sugar biosynthesis; UDP-N-acetyl-alpha-D-glucosamine biosynthesis; UDP-N-acetyl-alpha-D-glucosamine from N-acetyl-alpha-D-glucosamine 1-phosphate: step 1/1. Its pathway is bacterial outer membrane biogenesis; LPS lipid A biosynthesis. Catalyzes the last two sequential reactions in the de novo biosynthetic pathway for UDP-N-acetylglucosamine (UDP-GlcNAc). The C-terminal domain catalyzes the transfer of acetyl group from acetyl coenzyme A to glucosamine-1-phosphate (GlcN-1-P) to produce N-acetylglucosamine-1-phosphate (GlcNAc-1-P), which is converted into UDP-GlcNAc by the transfer of uridine 5-monophosphate (from uridine 5-triphosphate), a reaction catalyzed by the N-terminal domain. This is Bifunctional protein GlmU from Bifidobacterium adolescentis (strain ATCC 15703 / DSM 20083 / NCTC 11814 / E194a).